The sequence spans 779 residues: 3-isopropylmalate dehydratase (779 aa).

The [4Fe-4S] cluster site is built by C360, C421, and C424. Residues 484 to 518 (QDQSSPKVEVTSEDEKELESAAYDHAEPVQPEDAP) are disordered. Residue S488 is modified to Phosphoserine. Phosphothreonine is present on T494. S495 is subject to Phosphoserine. Residues 501–510 (LESAAYDHAE) show a composition bias toward basic and acidic residues.

The protein belongs to the aconitase/IPM isomerase family. In terms of assembly, monomer. [4Fe-4S] cluster is required as a cofactor.

It carries out the reaction (2R,3S)-3-isopropylmalate = (2S)-2-isopropylmalate. It functions in the pathway amino-acid biosynthesis; L-leucine biosynthesis; L-leucine from 3-methyl-2-oxobutanoate: step 2/4. Its function is as follows. Catalyzes the isomerization between 2-isopropylmalate and 3-isopropylmalate, via the formation of 2-isopropylmaleate. This Saccharomyces cerevisiae (strain ATCC 204508 / S288c) (Baker's yeast) protein is 3-isopropylmalate dehydratase (LEU1).